The chain runs to 191 residues: Xanthine phosphoribosyltransferase (191 aa).

Xanthine-binding residues include Leu-20 and Asn-27. 128-132 (ANGQA) serves as a coordination point for 5-phospho-alpha-D-ribose 1-diphosphate. Lys-156 is a binding site for xanthine.

It belongs to the purine/pyrimidine phosphoribosyltransferase family. Xpt subfamily. As to quaternary structure, homodimer.

It is found in the cytoplasm. The enzyme catalyses XMP + diphosphate = xanthine + 5-phospho-alpha-D-ribose 1-diphosphate. Its pathway is purine metabolism; XMP biosynthesis via salvage pathway; XMP from xanthine: step 1/1. Functionally, converts the preformed base xanthine, a product of nucleic acid breakdown, to xanthosine 5'-monophosphate (XMP), so it can be reused for RNA or DNA synthesis. This is Xanthine phosphoribosyltransferase from Levilactobacillus brevis (strain ATCC 367 / BCRC 12310 / CIP 105137 / JCM 1170 / LMG 11437 / NCIMB 947 / NCTC 947) (Lactobacillus brevis).